Reading from the N-terminus, the 518-residue chain is Major facilitator superfamily multidrug transporter mfsC (518 aa).

The next 7 membrane-spanning stretches (helical) occupy residues 27 to 47, 65 to 85, 88 to 108, 123 to 143, 152 to 172, 183 to 203, and 212 to 232; these read VLLT…SVLF, WVLI…GQLG, FGLE…NVIN, ISGV…SNTF, ALAI…VVGS, IFWL…LFLP, and PIDI…VYGL. N-linked (GlcNAc...) asparagine glycosylation occurs at N233. Transmembrane regions (helical) follow at residues 242-262, 281-301, 315-335, 347-367, 380-400, 409-429, and 455-475; these read SAAM…FLWV, FLVM…WFFI, ILTA…GVFA, ILVA…FAGP, TAII…SILL, AVAG…ILAG, and AFWL…VCYW.

The protein belongs to the major facilitator superfamily. EmrB family.

Its subcellular location is the membrane. Functionally, major facilitator superfamily transporter that may be involved in A.fumigatus adaptation to azoles such as vorizonazole. The protein is Major facilitator superfamily multidrug transporter mfsC of Aspergillus fumigatus (strain ATCC MYA-4609 / CBS 101355 / FGSC A1100 / Af293) (Neosartorya fumigata).